Consider the following 179-residue polypeptide: UPF0302 protein YpiB (179 aa).

It belongs to the UPF0302 family.

This Bacillus subtilis (strain 168) protein is UPF0302 protein YpiB (ypiB).